Consider the following 103-residue polypeptide: Co-chaperonin GroES (103 aa).

The protein belongs to the GroES chaperonin family. As to quaternary structure, heptamer of 7 subunits arranged in a ring. Interacts with the chaperonin GroEL.

The protein localises to the cytoplasm. Its function is as follows. Together with the chaperonin GroEL, plays an essential role in assisting protein folding. The GroEL-GroES system forms a nano-cage that allows encapsulation of the non-native substrate proteins and provides a physical environment optimized to promote and accelerate protein folding. GroES binds to the apical surface of the GroEL ring, thereby capping the opening of the GroEL channel. This Prochlorococcus marinus (strain SARG / CCMP1375 / SS120) protein is Co-chaperonin GroES.